Consider the following 957-residue polypeptide: MTQHLERPELLSIAATKALDKLQQAHPELLAQWPTERQNELETVIGLSDFIASSLVCDGQLLLWLSEHLDDKEHAEQYRQQLETKLATTADDVGLMRQLRAFRRQEMVWIAWRDFTNKSTLEQSLAHLSQLAEALIMEAYQWLYNQCCKEWGTPTNSAGEAQPMLVLGMGKLGGGELNFSSDIDLIFTYPENGDTVGGRRSMANAQFFTRLGQRLIKALDQPTYDGFCYRVDMRLRPFGDSGPLVMSYAALEDYYQEQGRDWERYAMIKARVMGRESFTQYQELRQMLRPFVFRRYIDFSAIQALRRMKSMISSEVRRRGLSNNIKLGAGGIREVEFIAQSFQLIRGGREPSLRGRGLLETLAAMKQLALLPEKQIEHLEQGYCFLRKLENLLQAIDDKQTQTLPDKPLDQIRLAFAMGYADWQSLFEAIELHMSAVHLVFDDIIGTDEDDAGCSVSEQYNEMWTMAKDEDVLLNIMAELEAPDSANQVSTILGMKAELSKRTLGPRGREVLTRLMPEVLSRIVPRPDASAVLARVTKLIVRVATRTTYLELLGEHPAALGQLIRLCAASPMVAEQLTQYPILLDELLDPQHLYNPTPLDQYGDELREYLARIPEEDMEQQMEAIRQYKQAQLLRIAAADIAGALPLMAVSDHLTYLAEAIITAVVNQAWLQMAEKYGEPTHLVDRNGKGFGVIGYGKVGGWELGYGSDLDVVFLHDCPADIYTNGKKEIDGRQFYLRLAQRIVHLFSTRTSSGVLYEIDVRLRPSGASGLLVSTVESFDEYQQKEAWTWEHQALVRARMIYGDVPLFDAFSDVRKRILTQPRDTQSLQVDVVSMRHKMRVHLGSKKNGMFGLKQDKGGITDIEFLAQYLVLQHSHTEPYLTRWSDNVRIFDTMAECEVLSLSQASALKQAYCVMRDDIHRLNLLGLPVYVDESQFVTERETVQQIWQEYLVPSSDE.

The interval 1 to 449 is adenylyl removase; sequence MTQHLERPEL…VFDDIIGTDE (449 aa). Positions 457 to 957 are adenylyl transferase; sequence SEQYNEMWTM…QEYLVPSSDE (501 aa).

This sequence belongs to the GlnE family. Mg(2+) is required as a cofactor.

It carries out the reaction [glutamine synthetase]-O(4)-(5'-adenylyl)-L-tyrosine + phosphate = [glutamine synthetase]-L-tyrosine + ADP. It catalyses the reaction [glutamine synthetase]-L-tyrosine + ATP = [glutamine synthetase]-O(4)-(5'-adenylyl)-L-tyrosine + diphosphate. Involved in the regulation of glutamine synthetase GlnA, a key enzyme in the process to assimilate ammonia. When cellular nitrogen levels are high, the C-terminal adenylyl transferase (AT) inactivates GlnA by covalent transfer of an adenylyl group from ATP to specific tyrosine residue of GlnA, thus reducing its activity. Conversely, when nitrogen levels are low, the N-terminal adenylyl removase (AR) activates GlnA by removing the adenylyl group by phosphorolysis, increasing its activity. The regulatory region of GlnE binds the signal transduction protein PII (GlnB) which indicates the nitrogen status of the cell. In Photobacterium profundum (strain SS9), this protein is Bifunctional glutamine synthetase adenylyltransferase/adenylyl-removing enzyme.